The following is a 158-amino-acid chain: uncharacterized protein (158 aa).

The N-terminal stretch at 1-22 is a signal peptide; that stretch reads MKKIPNKLLAVSAFLTITTTYA. Residues 120-140 traverse the membrane as a helical segment; the sequence is LTGIIEYDTKFENHYETLVEA.

It is found in the cell membrane. This is an uncharacterized protein from Bacillus cereus.